The following is a 298-amino-acid chain: CD-NTase-associated protein 6 (298 aa).

ATP contacts are provided by residues glycine 80 to alanine 85 and arginine 204 to arginine 205.

The protein belongs to the AAA ATPase family. In terms of assembly, homohexamer, forms a 1:1:6 CdnC:Cap7:Cap6 complex.

Regulates complex assembly in a CBASS antivirus system. CBASS (cyclic oligonucleotide-based antiphage signaling system) provides immunity against bacteriophage. The CD-NTase protein synthesizes cyclic nucleotides in response to infection; these serve as specific second messenger signals. The signals activate a diverse range of effectors, leading to bacterial cell death and thus abortive phage infection. A type III CBASS system. Expression of this CBASS system (Cap18-Cap6-Cap7-CdnC-CapW-Cap17) in a susceptible E.coli (strain MG1655) confers resistance to bacteriophage P1. Binds and disassembles an active CdnC:Cap7 complex, inhibiting the complex's ability to synthesize cyclic nucleotide second messengers. An AAA+-ATPase remodeler, in the absence of foreign threat Cap6 probably maintains the Cap7 protein in its open, inactive state. Once activated (presumably by a bacteriophage protein) Cap7 binds to and activates its cognate CD-NTase (CdnC in this bacteria) to synthesize a cyclic nucleotide second messenger which leads to abortive phage infection. In Escherichia coli (strain KTE188), this protein is CD-NTase-associated protein 6.